Reading from the N-terminus, the 528-residue chain is MFGIRSGNNNGGFTNLTSQAPQTTQMFQSQSQLQPQPQPQPQQQQQHLQFNGSSDASSLRFGNSLSNTVNANNYSSNIGNNSINNNNIKNGTNNISQHGQGNNPSWVNNPKKRFTPHTVIRRKTTKQNSSSDINQNDDSSSMNATMRNFSKQNQDSKHNERNKSAANNDINSLLSNFNDIPPSVTLQDWQREDEFGSIPSLTTQFVTDKYTAKKTNRSAYDSKNTPNVFDKDSYVRIANIEQNHLDNNYNTAETNNKVHETSSKSSSLSAIIVFGYPESISNELIEHFSHFGHIMEDFQVLRLGRGINPNTFRIFHNHDTGCDENDSTVNKSITLKGRNNESNNKKYPIFTGESWVKLTYNSPSSALRALQENGTIFRGSLIGCIPYSKNAVEQLAGCKIDNVDDIGEFNVSMYQNSSTSSTSNTPSPPNVIITDGTLLREDDNTPAGHAGNPTNISSPIVANSPNKRLDVIDGKLPFMQNAGPNSNIPNLLRNLESKMRQQEAKYRNNEPAGFTHKLSNWLFGWNDL.

An FG 1 repeat occupies 2 to 3 (FG). Residues 23–50 (TTQMFQSQSQLQPQPQPQPQQQQQHLQF) show a composition bias toward low complexity. 2 disordered regions span residues 23–64 (TTQM…FGNS) and 88–144 (IKNG…SMNA). Polar residues-rich tracts occupy residues 51–64 (NGSSDASSLRFGNS) and 97–108 (QHGQGNNPSWVN). The FG 2 repeat unit spans residues 61–62 (FG). Over residues 110–125 (PKKRFTPHTVIRRKTT) the composition is skewed to basic residues. Low complexity predominate over residues 127-141 (QNSSSDINQNDDSSS). FG repeat units lie at residues 195–196 (FG), 274–275 (FG), and 291–292 (FG). The RRM Nup35-type domain occupies 265-394 (SSSLSAIIVF…IPYSKNAVEQ (130 aa)). Phosphoserine is present on residues Ser458 and Ser464. Residues 490–510 (NLLRNLESKMRQQEAKYRNNE) are a coiled coil. The stretch at 523–524 (FG) is one FG 6 repeat.

Component of the nuclear pore complex (NPC). NPC constitutes the exclusive means of nucleocytoplasmic transport. NPCs allow the passive diffusion of ions and small molecules and the active, nuclear transport receptor-mediated bidirectional transport of macromolecules such as proteins, RNAs, ribonucleoparticles (RNPs), and ribosomal subunits across the nuclear envelope. Due to its 8-fold rotational symmetry, all subunits are present with 8 copies or multiples thereof. ASM4 may form a subcomplex with NUP53, NDC1, and NUP170. Post-translationally, phosphorylated by CDC28.

It is found in the nucleus. The protein localises to the nuclear pore complex. The protein resides in the nucleus membrane. Its function is as follows. Functions as a component of the nuclear pore complex (NPC). NPC components, collectively referred to as nucleoporins (NUPs), can play the role of both NPC structural components and of docking or interaction partners for transiently associated nuclear transport factors. Active directional transport is assured by both, a Phe-Gly (FG) repeat affinity gradient for these transport factors across the NPC and a transport cofactor concentration gradient across the nuclear envelope (GSP1 and GSP2 GTPases associated predominantly with GTP in the nucleus, with GDP in the cytoplasm). May have a mitosis control function. This is Nucleoporin ASM4 (ASM4) from Saccharomyces cerevisiae (strain ATCC 204508 / S288c) (Baker's yeast).